A 336-amino-acid polypeptide reads, in one-letter code: Cell division protein ZipA (336 aa).

At 1-6 the chain is on the periplasmic side; the sequence is MEDLQL. The chain crosses the membrane as a helical span at residues 7-27; that stretch reads VLFVLGAIAIIAVLVHGFWSI. Residues 28–336 are Cytoplasmic-facing; it reads RKQQPKPIKE…DYLRRIKAIV (309 aa). Disordered regions lie at residues 31–118 and 174–200; these read QPKP…PVRA and YGATTQASPQPASPVQSQAPREPEPLG. Residues 73–91 are compositionally biased toward polar residues; it reads LPSSRNHTSVPVMTLQKAS. Over residues 108 to 118 the composition is skewed to basic and acidic residues; it reads TTAERAEPVRA. Positions 179–193 are enriched in low complexity; it reads QASPQPASPVQSQAP.

The protein belongs to the ZipA family. Interacts with FtsZ via their C-terminal domains.

It is found in the cell inner membrane. In terms of biological role, essential cell division protein that stabilizes the FtsZ protofilaments by cross-linking them and that serves as a cytoplasmic membrane anchor for the Z ring. Also required for the recruitment to the septal ring of downstream cell division proteins. This chain is Cell division protein ZipA, found in Shewanella denitrificans (strain OS217 / ATCC BAA-1090 / DSM 15013).